A 133-amino-acid chain; its full sequence is Small ribosomal subunit protein uS8 (133 aa).

This sequence belongs to the universal ribosomal protein uS8 family. In terms of assembly, part of the 30S ribosomal subunit. Contacts proteins S5 and S12.

One of the primary rRNA binding proteins, it binds directly to 16S rRNA central domain where it helps coordinate assembly of the platform of the 30S subunit. The protein is Small ribosomal subunit protein uS8 of Deinococcus geothermalis (strain DSM 11300 / CIP 105573 / AG-3a).